The sequence spans 186 residues: Small ribosomal subunit protein uS5 (186 aa).

One can recognise an S5 DRBM domain in the interval Phe-18–Val-81.

The protein belongs to the universal ribosomal protein uS5 family. As to quaternary structure, part of the 30S ribosomal subunit. Contacts proteins S4 and S8.

With S4 and S12 plays an important role in translational accuracy. Its function is as follows. Located at the back of the 30S subunit body where it stabilizes the conformation of the head with respect to the body. This Parvibaculum lavamentivorans (strain DS-1 / DSM 13023 / NCIMB 13966) protein is Small ribosomal subunit protein uS5.